The chain runs to 95 residues: Large ribosomal subunit protein uL23 (95 aa).

It belongs to the universal ribosomal protein uL23 family. Part of the 50S ribosomal subunit. Contacts protein L29, and trigger factor when it is bound to the ribosome.

One of the early assembly proteins it binds 23S rRNA. One of the proteins that surrounds the polypeptide exit tunnel on the outside of the ribosome. Forms the main docking site for trigger factor binding to the ribosome. The polypeptide is Large ribosomal subunit protein uL23 (Bacillus subtilis (strain 168)).